We begin with the raw amino-acid sequence, 76 residues long: Bacteriocin uberolysin (76 aa).

A propeptide spanning residues 1–6 (MDILLE) is cleaved from the precursor. The segment at residues 7–76 (LAGYTGIASG…RNLKAQAVIW (70 aa)) is a cross-link (cyclopeptide (Leu-Trp)).

The protein belongs to the bacteriocin class V family.

The protein resides in the secreted. In terms of biological role, cyclopeptide antibiotic with bacteriolytic activity against most streptococci (except S.rattus and S.mutans), Listeria spp., enterococci and staphylococci. The chain is Bacteriocin uberolysin (ublA) from Streptococcus uberis.